Here is an 805-residue protein sequence, read N- to C-terminus: Leucine--tRNA ligase (805 aa).

The 'HIGH' region signature appears at 40–51 (PYPSGAGLHVGH). A 'KMSKS' region motif is present at residues 576 to 580 (KMSKS). Lys-579 lines the ATP pocket.

Belongs to the class-I aminoacyl-tRNA synthetase family.

It is found in the cytoplasm. It carries out the reaction tRNA(Leu) + L-leucine + ATP = L-leucyl-tRNA(Leu) + AMP + diphosphate. The chain is Leucine--tRNA ligase from Anoxybacillus flavithermus (strain DSM 21510 / WK1).